Here is a 92-residue protein sequence, read N- to C-terminus: Bombyxin A-6 (92 aa).

Residues 1–19 form the signal peptide; the sequence is MKILLAIALMLSTVMWVST. Gln20 is subject to Pyrrolidone carboxylic acid. Intrachain disulfides connect Cys29–Cys79, Cys41–Cys92, and Cys78–Cys83. A propeptide spans 50-70 (c peptide like); that stretch reads SGAQFASYGSAWLMPYSEGRG.

It belongs to the insulin family. As to quaternary structure, heterodimer of a B chain and an A chain linked by two disulfide bonds.

Its subcellular location is the secreted. Its function is as follows. Brain peptide responsible for activation of prothoracic glands to produce ecdysone in insects. This is Bombyxin A-6 (BBXA6) from Bombyx mori (Silk moth).